Consider the following 285-residue polypeptide: Extracellular metalloprotease NCU07200 (285 aa).

Residues 1–18 (MQIKSFLLAAAAAPAALG) form the signal peptide. Position 197 (His197) interacts with Zn(2+). Residue Glu198 is part of the active site. His201 lines the Zn(2+) pocket. Cys233 and Cys260 are oxidised to a cystine. Residue Asn282 is glycosylated (N-linked (GlcNAc...) asparagine).

The protein belongs to the peptidase M43B family.

Its subcellular location is the secreted. Functionally, secreted metalloproteinase that allows assimilation of proteinaceous substrates. This Neurospora crassa (strain ATCC 24698 / 74-OR23-1A / CBS 708.71 / DSM 1257 / FGSC 987) protein is Extracellular metalloprotease NCU07200.